We begin with the raw amino-acid sequence, 94 residues long: Small ribosomal subunit protein uS19m (94 aa).

It belongs to the universal ribosomal protein uS19 family.

It localises to the mitochondrion. This is Small ribosomal subunit protein uS19m (RPS19) from Petunia hybrida (Petunia).